Consider the following 130-residue polypeptide: Small ribosomal subunit protein bS18 (130 aa).

2 stretches are compositionally biased toward basic and acidic residues: residues Lys-98 to Glu-108 and Glu-117 to Glu-130. Positions Lys-98–Glu-130 are disordered.

Belongs to the bacterial ribosomal protein bS18 family. In terms of assembly, part of the 30S ribosomal subunit. Forms a tight heterodimer with protein bS6.

Functionally, binds as a heterodimer with protein bS6 to the central domain of the 16S rRNA, where it helps stabilize the platform of the 30S subunit. This is Small ribosomal subunit protein bS18 from Metamycoplasma arthritidis (strain 158L3-1) (Mycoplasma arthritidis).